The primary structure comprises 601 residues: Sulfite reductase [NADPH] flavoprotein alpha-component (601 aa).

Residues 64 to 202 (ITLISASQTG…SAQQWRQQIV (139 aa)) form the Flavodoxin-like domain. FMN contacts are provided by residues 70–75 (SQTGNA), 117–120 (STQG), and 153–162 (LGDTSYEHFC). Residues 236 to 450 (AAPLTAQLSV…IEHNDNFRLP (215 aa)) enclose the FAD-binding FR-type domain. FAD contacts are provided by residues Thr324, Lys358, 388–391 (RLYS), 406–408 (TVG), Tyr412, and 421–424 (GGAS). NADP(+) contacts are provided by residues 521 to 522 (SR), 527 to 531 (KIYVQ), and Asp563. Tyr601 serves as a coordination point for FAD.

This sequence belongs to the NADPH-dependent sulphite reductase flavoprotein subunit CysJ family. In the N-terminal section; belongs to the flavodoxin family. It in the C-terminal section; belongs to the flavoprotein pyridine nucleotide cytochrome reductase family. As to quaternary structure, alpha(8)-beta(8). The alpha component is a flavoprotein, the beta component is a hemoprotein. The cofactor is FAD. FMN is required as a cofactor.

It carries out the reaction hydrogen sulfide + 3 NADP(+) + 3 H2O = sulfite + 3 NADPH + 4 H(+). It functions in the pathway sulfur metabolism; hydrogen sulfide biosynthesis; hydrogen sulfide from sulfite (NADPH route): step 1/1. Its function is as follows. Component of the sulfite reductase complex that catalyzes the 6-electron reduction of sulfite to sulfide. This is one of several activities required for the biosynthesis of L-cysteine from sulfate. The flavoprotein component catalyzes the electron flow from NADPH -&gt; FAD -&gt; FMN to the hemoprotein component. In Yersinia enterocolitica serotype O:8 / biotype 1B (strain NCTC 13174 / 8081), this protein is Sulfite reductase [NADPH] flavoprotein alpha-component.